A 469-amino-acid chain; its full sequence is Trigger factor (469 aa).

In terms of domain architecture, PPIase FKBP-type spans 166-245; the sequence is GDFLTIDITA…VKSVKERELP (80 aa). A disordered region spans residues 430 to 469; the sequence is GGEEEAAEAEAAPAVDSDAVEGEAATEEAAPSDDPAAVKF.

This sequence belongs to the FKBP-type PPIase family. Tig subfamily.

It is found in the cytoplasm. It carries out the reaction [protein]-peptidylproline (omega=180) = [protein]-peptidylproline (omega=0). In terms of biological role, involved in protein export. Acts as a chaperone by maintaining the newly synthesized protein in an open conformation. Functions as a peptidyl-prolyl cis-trans isomerase. This is Trigger factor from Arthrobacter sp. (strain FB24).